A 45-amino-acid polypeptide reads, in one-letter code: Lysis protein for colicin E1 (45 aa).

A signal peptide spans 1-17; it reads MRKRFFVGIFAINLLVG. A lipid anchor (N-palmitoyl cysteine) is attached at C18. C18 is lipidated: S-diacylglycerol cysteine.

It is found in the cell outer membrane. In terms of biological role, lysis proteins are required for both colicin release and partial cell lysis. In Escherichia coli, this protein is Lysis protein for colicin E1 (lys).